The primary structure comprises 366 residues: MRPAQASIDLEALRHNYRLAKRLGGSKALAVVKADAYGHGAVRCAQALEPEADGFAVACIEEALELRQAGIRAPILLLEGFFEHDELRLIAEHDLWTVAATPQQVRALAEFQSPRPLRVWLKLDSGMHRLGLSPEDFRAAWLRLRGLPQIASLVLMTHLARADELDCSRTDEQAVAFALTAGGMRAETSLRNSPGLLGWPALRNDWSRPGLMLYGANPFPQDTENTAQLRPVMTLRSRIISVRELPAGEPVGYGARFVAERPTRVGVVAMGYADGYPQFAPNGTPVLVDGQVCPLAGRVSMDMLTVDLTDHPQADIGTPVQLWGDAPQVGALAAQCNVSAYQLLCGLKRVPRVYMGEAAAKEGVTR.

Residue Lys-33 is the Proton acceptor; specific for D-alanine of the active site. The residue at position 33 (Lys-33) is an N6-(pyridoxal phosphate)lysine. Arg-129 lines the substrate pocket. Tyr-253 (proton acceptor; specific for L-alanine) is an active-site residue. Met-301 is a substrate binding site.

This sequence belongs to the alanine racemase family. It depends on pyridoxal 5'-phosphate as a cofactor.

It catalyses the reaction L-alanine = D-alanine. Its pathway is amino-acid biosynthesis; D-alanine biosynthesis; D-alanine from L-alanine: step 1/1. Functionally, catalyzes the interconversion of L-alanine and D-alanine. May also act on other amino acids. This chain is Alanine racemase (alr), found in Xanthomonas axonopodis pv. citri (strain 306).